Reading from the N-terminus, the 1141-residue chain is Membrane-associated protein gex-3 (1141 aa).

Belongs to the HEM-1/HEM-2 family. As to quaternary structure, interacts with aco-1, gei-13 and gex-2. Interacts with gex-3. In terms of tissue distribution, expressed in neurons.

Its subcellular location is the cytoplasm. In terms of biological role, rac effector required for tissue morphogenesis, cell migrations and egg laying. May play a role in egg laying and in yolk protein clatherin-mediated endocytosis by oocytes during oogenesis. Plays a role in the formation of gap junctions between EA and EP endodermal precursor cells in embryos. The chain is Membrane-associated protein gex-3 from Caenorhabditis elegans.